We begin with the raw amino-acid sequence, 389 residues long: Formate-dependent phosphoribosylglycinamide formyltransferase (389 aa).

Residues Glu-12 to Leu-13 and Glu-72 contribute to the N(1)-(5-phospho-beta-D-ribosyl)glycinamide site. ATP-binding positions include Arg-104, Lys-145, Ser-150–Gln-155, Glu-185–Ile-188, and Glu-193. The ATP-grasp domain occupies Asp-109 to Leu-301. Positions 258 and 271 each coordinate Mg(2+). N(1)-(5-phospho-beta-D-ribosyl)glycinamide is bound by residues Asp-278, Lys-350, and Arg-357 to Arg-358.

This sequence belongs to the PurK/PurT family. In terms of assembly, homodimer.

The enzyme catalyses N(1)-(5-phospho-beta-D-ribosyl)glycinamide + formate + ATP = N(2)-formyl-N(1)-(5-phospho-beta-D-ribosyl)glycinamide + ADP + phosphate + H(+). It participates in purine metabolism; IMP biosynthesis via de novo pathway; N(2)-formyl-N(1)-(5-phospho-D-ribosyl)glycinamide from N(1)-(5-phospho-D-ribosyl)glycinamide (formate route): step 1/1. Its function is as follows. Involved in the de novo purine biosynthesis. Catalyzes the transfer of formate to 5-phospho-ribosyl-glycinamide (GAR), producing 5-phospho-ribosyl-N-formylglycinamide (FGAR). Formate is provided by PurU via hydrolysis of 10-formyl-tetrahydrofolate. The chain is Formate-dependent phosphoribosylglycinamide formyltransferase from Phocaeicola vulgatus (strain ATCC 8482 / DSM 1447 / JCM 5826 / CCUG 4940 / NBRC 14291 / NCTC 11154) (Bacteroides vulgatus).